A 263-amino-acid chain; its full sequence is Uroporphyrinogen-III C-methyltransferase (263 aa).

Residues Pro20, 96–98 (GGD), 126–127 (TA), Met180, and Ala237 contribute to the S-adenosyl-L-homocysteine site.

It belongs to the precorrin methyltransferase family.

It carries out the reaction uroporphyrinogen III + 2 S-adenosyl-L-methionine = precorrin-2 + 2 S-adenosyl-L-homocysteine + H(+). It functions in the pathway cofactor biosynthesis; adenosylcobalamin biosynthesis; precorrin-2 from uroporphyrinogen III: step 1/1. It participates in porphyrin-containing compound metabolism; siroheme biosynthesis; precorrin-2 from uroporphyrinogen III: step 1/1. Its function is as follows. Catalyzes the two successive C-2 and C-7 methylation reactions involved in the conversion of uroporphyrinogen III to precorrin-2 via the intermediate formation of precorrin-1. It is a step in the biosynthesis of both cobalamin (vitamin B12) and siroheme. This is Uroporphyrinogen-III C-methyltransferase (cobA) from Synechocystis sp. (strain ATCC 27184 / PCC 6803 / Kazusa).